Reading from the N-terminus, the 308-residue chain is Quinolinate synthase (308 aa).

The iminosuccinate site is built by His-24 and Ser-41. Cys-86 lines the [4Fe-4S] cluster pocket. Iminosuccinate contacts are provided by residues 112 to 114 (YIN) and Ser-129. Residue Cys-172 coordinates [4Fe-4S] cluster. Iminosuccinate-binding positions include 198-200 (HPE) and Thr-215. Cys-265 is a [4Fe-4S] cluster binding site.

The protein belongs to the quinolinate synthase family. Type 2 subfamily. Requires [4Fe-4S] cluster as cofactor.

The protein resides in the cytoplasm. It carries out the reaction iminosuccinate + dihydroxyacetone phosphate = quinolinate + phosphate + 2 H2O + H(+). It participates in cofactor biosynthesis; NAD(+) biosynthesis; quinolinate from iminoaspartate: step 1/1. In terms of biological role, catalyzes the condensation of iminoaspartate with dihydroxyacetone phosphate to form quinolinate. In Sulfurihydrogenibium sp. (strain YO3AOP1), this protein is Quinolinate synthase.